The primary structure comprises 428 residues: ATP-dependent RNA helicase RhlB (428 aa).

Positions 9–37 match the Q motif motif; that stretch reads QKFSDFALHPLVLEALEKKGFQHCTPIQA. Residues 40–219 form the Helicase ATP-binding domain; that stretch reads LPLTLSGRDV…FEQMNNAEYV (180 aa). 53-60 is a binding site for ATP; it reads AQTGTGKT. The DEAD box motif lies at 165-168; sequence DEAD. The Helicase C-terminal domain occupies 245 to 390; it reads RLLQTLIEEE…VSKYNSDALL (146 aa). The disordered stretch occupies residues 392-428; it reads DLPAPKRLARPRGGNGPRRNSAPRRGGAPRNNRKRSG. The span at 408-421 shows a compositional bias: low complexity; sequence PRRNSAPRRGGAPR.

The protein belongs to the DEAD box helicase family. RhlB subfamily. Component of the RNA degradosome, which is a multiprotein complex involved in RNA processing and mRNA degradation.

Its subcellular location is the cytoplasm. The catalysed reaction is ATP + H2O = ADP + phosphate + H(+). Its function is as follows. DEAD-box RNA helicase involved in RNA degradation. Has RNA-dependent ATPase activity and unwinds double-stranded RNA. The polypeptide is ATP-dependent RNA helicase RhlB (Serratia proteamaculans (strain 568)).